Here is a 296-residue protein sequence, read N- to C-terminus: Nucleotide-binding protein SGO_0954 (296 aa).

Residue 13–20 (GMSGAGKT) coordinates ATP. Residue 63-66 (DMRS) participates in GTP binding.

It belongs to the RapZ-like family.

Its function is as follows. Displays ATPase and GTPase activities. The sequence is that of Nucleotide-binding protein SGO_0954 from Streptococcus gordonii (strain Challis / ATCC 35105 / BCRC 15272 / CH1 / DL1 / V288).